A 437-amino-acid chain; its full sequence is GTPase Der (437 aa).

EngA-type G domains are found at residues 4–167 (PIVA…PDNA) and 175–352 (IHFS…QHHR). GTP-binding positions include 10-17 (GRPNVGKS), 57-61 (DTGGI), 119-122 (NKVD), 181-188 (GRPNVGKS), 229-233 (DTAGI), and 294-297 (NKWD). Positions 353 to 437 (QRIQSAVLND…PIHLIKRQRQ (85 aa)) constitute a KH-like domain.

This sequence belongs to the TRAFAC class TrmE-Era-EngA-EngB-Septin-like GTPase superfamily. EngA (Der) GTPase family. In terms of assembly, associates with the 50S ribosomal subunit.

Its function is as follows. GTPase that plays an essential role in the late steps of ribosome biogenesis. The sequence is that of GTPase Der from Limosilactobacillus reuteri (strain DSM 20016) (Lactobacillus reuteri).